A 464-amino-acid polypeptide reads, in one-letter code: Arylsulfatase (464 aa).

The N-terminal stretch at 1-20 (MNKKAMAAAVSMILAGGAHA) is a signal peptide. Ca(2+) contacts are provided by Asp34, Asp35, and Ser72. The active-site Nucleophile is Ser72. Ser72 is subject to 3-oxoalanine (Ser). His134 is an active-site residue. Ca(2+) is bound by residues Asp329 and Asn330.

Belongs to the sulfatase family. It depends on Ca(2+) as a cofactor. The conversion to 3-oxoalanine (also known as C-formylglycine, FGly), of a serine or cysteine residue in prokaryotes and of a cysteine residue in eukaryotes, is critical for catalytic activity.

Its subcellular location is the periplasm. The enzyme catalyses an aryl sulfate + H2O = a phenol + sulfate + H(+). Functionally, plays an important role in the mineralization of sulfates. In Klebsiella aerogenes (Enterobacter aerogenes), this protein is Arylsulfatase (atsA).